The following is a 325-amino-acid chain: MSEATDKQKQVSAETPLERDLKSKQQSIAATKRKQYRDDKSQIRKQARFEVSTTPEPEQSDSSATTATITELPKKRYYRQRAHSNPFSDHRLEYPKSPESMDWSNLYPKQYDISKVEIADIGCGYGGLMIKLGPQFPKSLILGLEIRVQVTQYVEDRIIALRKNQEIINDKKKKESGGGTGDGDDNDYSYQNIAVLRGNAMKFLPNFFVKGQLSKMFFCFPDPHFKQRKHKARIITNTLLSEYAYVLREGGVVYTITDVEDLHNWMVKHLDEHPLFERLSKEWEDQDKCVEIMYNATEEGQKVTRNKGSKWVACYKRLPSPDDCE.

Residues 1–101 (MSEATDKQKQ…LEYPKSPESM (101 aa)) form a disordered region. Residues 51–69 (VSTTPEPEQSDSSATTATI) show a composition bias toward polar residues. Residues glycine 122, 145–146 (EI), 199–200 (NA), and cysteine 219 contribute to the S-adenosyl-L-methionine site. Aspartate 222 is an active-site residue. Residue 297-299 (TEE) participates in S-adenosyl-L-methionine binding.

It belongs to the class I-like SAM-binding methyltransferase superfamily. TrmB family. Forms a complex with TRM82.

The protein resides in the nucleus. The catalysed reaction is guanosine(46) in tRNA + S-adenosyl-L-methionine = N(7)-methylguanosine(46) in tRNA + S-adenosyl-L-homocysteine. The protein operates within tRNA modification; N(7)-methylguanine-tRNA biosynthesis. Catalyzes the formation of N(7)-methylguanine at position 46 (m7G46) in tRNA. This chain is tRNA (guanine-N(7)-)-methyltransferase, found in Candida albicans (strain SC5314 / ATCC MYA-2876) (Yeast).